The sequence spans 172 residues: Centrin-2 (172 aa).

Residues 1 to 30 (MASNFKKANMASSSQRKRMSPKPELTEEQK) are disordered. At Ala2 the chain carries N-acetylalanine. A required for self-assembly region spans residues 2-25 (ASNFKKANMASSSQRKRMSPKPEL). Ser20 is subject to Phosphoserine. Lys22 is covalently cross-linked (Glycyl lysine isopeptide (Lys-Gly) (interchain with G-Cter in SUMO2)). The residue at position 26 (Thr26) is a Phosphothreonine. EF-hand domains are found at residues 28–63 (EQKQEIREAFDLFDADGTGTIDVKELKVAMRALGFE), 64–99 (PKKEEIKKMISEIDKEGTGKMNFGDFLTVMTQKMSE), 101–136 (DTKEEILKAFKLFDDDETGKISFKNLKRVAKELGEN), and 137–172 (LTDEELQEMIDEADRDGDGEVSEQEFLRIMKKTSLY). Residues Asp41, Asp43, Thr45, Thr47, and Glu52 each coordinate Ca(2+). Positions 150, 152, 154, 156, and 161 each coordinate Ca(2+).

Belongs to the centrin family. In terms of assembly, monomer. Homooligomer. Interacts with SFI1. Interacts with CCP110. Component of the XPC complex composed of XPC, RAD23B and CETN2. Component of the nuclear pore complex (NPC)-associated TREX-2 complex (transcription and export complex 2), composed of at least GANP, 2 copies of ENY2, PCID2, SEM1/DSS1, and either centrin CETN2 or centrin CETN3. The TREX-2 complex also associates with ALYREF/ALY and with the nucleoporin NUP153. Interacts with USP49. Forms a microtubule-associated complex with POC5, POC1B and FAM161A. Interacts with CCDC15.

The protein resides in the cytoplasm. It is found in the cytoskeleton. Its subcellular location is the microtubule organizing center. It localises to the centrosome. The protein localises to the centriole. The protein resides in the nucleus envelope. It is found in the nucleus. Its subcellular location is the nuclear pore complex. Functionally, plays a fundamental role in microtubule organizing center structure and function. Required for centriole duplication and correct spindle formation. Has a role in regulating cytokinesis and genome stability via cooperation with CALM1 and CCP110. In terms of biological role, involved in global genome nucleotide excision repair (GG-NER) by acting as component of the XPC complex. Cooperatively with RAD23B appears to stabilize XPC. In vitro, stimulates DNA binding of the XPC:RAD23B dimer. The XPC complex is proposed to represent the first factor bound at the sites of DNA damage and together with other core recognition factors, XPA, RPA and the TFIIH complex, is part of the pre-incision (or initial recognition) complex. The XPC complex recognizes a wide spectrum of damaged DNA characterized by distortions of the DNA helix such as single-stranded loops, mismatched bubbles or single-stranded overhangs. The orientation of XPC complex binding appears to be crucial for inducing a productive NER. XPC complex is proposed to recognize and to interact with unpaired bases on the undamaged DNA strand which is followed by recruitment of the TFIIH complex and subsequent scanning for lesions in the opposite strand in a 5'-to-3' direction by the NER machinery. Cyclobutane pyrimidine dimers (CPDs) which are formed upon UV-induced DNA damage esacpe detection by the XPC complex due to a low degree of structural perurbation. Instead they are detected by the UV-DDB complex which in turn recruits and cooperates with the XPC complex in the respective DNA repair. Its function is as follows. As a component of the TREX-2 complex, involved in the export of mRNAs to the cytoplasm through the nuclear pores. In Homo sapiens (Human), this protein is Centrin-2 (CETN2).